Here is a 236-residue protein sequence, read N- to C-terminus: H2HPP isomerase (236 aa).

Cupin type-2 domains are found at residues 40–106 (YVPP…AIDI) and 151–215 (NIPG…SKSV). Histidine 50, histidine 52, glutamine 56, histidine 91, histidine 162, histidine 164, glutamine 168, and histidine 202 together coordinate a divalent metal cation. Residue tyrosine 223 participates in substrate binding.

Monomer. It depends on Fe(2+) as a cofactor. The cofactor is Co(2+).

The protein resides in the cytoplasm. It carries out the reaction 3-[(4R)-4-hydroxycyclohexa-1,5-dien-1-yl]-2-oxopropanoate = 3-[(1E,4R)-4-hydroxycyclohex-2-en-1-ylidene]pyruvate. It participates in antibiotic biosynthesis; bacilysin biosynthesis. Its function is as follows. Part of the bacABCDEF operon responsible for the biosynthesis of the nonribosomally synthesized dipeptide antibiotic bacilysin, composed of L-alanine and L-anticapsin. Bacilysin is an irreversible inactivator of the glutaminase domain of glucosamine synthetase. BacB catalyzes the allylic isomerization of the endocyclic-delta(4),delta(8)-7R-dihydro-hydroxyphenylpyruvate (en-H2HPP) to generate a mixture of 3E,7R- and 3Z, 7R-olefins of the exocyclic-delta(3),delta(5)-dihydro-hydroxyphenylpyruvate (ex-H2HPP). This is H2HPP isomerase from Bacillus amyloliquefaciens (Bacillus velezensis).